The primary structure comprises 20 residues: Collagenolytic protease 36 kDa A (20 aa).

The 20-residue stretch at 1-20 folds into the Peptidase S1 domain; it reads IVGGTEVTPGEIPYQLSLQD. Positions 1–20 are disordered; it reads IVGGTEVTPGEIPYQLSLQD.

The protein belongs to the peptidase S1 family.

The enzyme catalyses Hydrolysis of proteins, with broad specificity for peptide bonds. Native collagen is cleaved about 75% of the length of the molecule from the N-terminus. Low activity on small molecule substrates of both trypsin and chymotrypsin.. Functionally, this enzyme is a serine protease capable of degrading the native triple helix of collagen. This Paralithodes camtschaticus (Red king crab) protein is Collagenolytic protease 36 kDa A.